Consider the following 104-residue polypeptide: L-rhamnose mutarotase (104 aa).

Tyrosine 18 contributes to the substrate binding site. Histidine 22 (proton donor) is an active-site residue. Substrate contacts are provided by residues tyrosine 41 and 76–77; that span reads WW.

The protein belongs to the rhamnose mutarotase family. In terms of assembly, homodimer.

The protein localises to the cytoplasm. It carries out the reaction alpha-L-rhamnose = beta-L-rhamnose. It functions in the pathway carbohydrate metabolism; L-rhamnose metabolism. Its function is as follows. Involved in the anomeric conversion of L-rhamnose. This Cronobacter sakazakii (strain ATCC BAA-894) (Enterobacter sakazakii) protein is L-rhamnose mutarotase.